We begin with the raw amino-acid sequence, 313 residues long: Fe-S cluster assembly protein dre2 (313 aa).

2 disordered regions span residues 1 to 25 (MSIT…SQKR) and 151 to 187 (GRKK…AQNN). An N-terminal SAM-like domain region spans residues 20-145 (NGSQKRNLLL…FEKPVQEAAV (126 aa)). Positions 146–203 (PLKLGGRKKKDKTNGVNGVQNGVATNGASTNGVGMFDPAQNNDDELIDEDALLSDDDL) are linker. Polar residues predominate over residues 159–177 (NGVNGVQNGVATNGASTNG). Cysteine 213, cysteine 225, cysteine 228, and cysteine 230 together coordinate [2Fe-2S] cluster. The interval 213 to 230 (CVPETAKKRRRPCKDCTC) is fe-S binding site A. [4Fe-4S] cluster-binding residues include cysteine 276, cysteine 279, cysteine 287, and cysteine 290. 2 consecutive short sequence motifs (cx2C motif) follow at residues 276–279 (CNSC) and 287–290 (CSSC). The segment at 276 to 290 (CNSCSLGDAFRCSSC) is fe-S binding site B.

It belongs to the anamorsin family. As to quaternary structure, monomer. Interacts with tah18. Interacts with mia40. It depends on [2Fe-2S] cluster as a cofactor. [4Fe-4S] cluster serves as cofactor.

The protein resides in the cytoplasm. The protein localises to the mitochondrion intermembrane space. Functionally, component of the cytosolic iron-sulfur (Fe-S) protein assembly (CIA) machinery required for the maturation of extramitochondrial Fe-S proteins. Part of an electron transfer chain functioning in an early step of cytosolic Fe-S biogenesis, facilitating the de novo assembly of a [4Fe-4S] cluster on the scaffold complex cfd1-nbp35. Electrons are transferred to dre2 from NADPH via the FAD- and FMN-containing protein tah18. Tah18-dre2 are also required for the assembly of the diferric tyrosyl radical cofactor of ribonucleotide reductase (RNR), probably by providing electrons for reduction during radical cofactor maturation in the catalytic small subunit rnr2. This chain is Fe-S cluster assembly protein dre2, found in Aspergillus oryzae (strain ATCC 42149 / RIB 40) (Yellow koji mold).